A 470-amino-acid polypeptide reads, in one-letter code: tRNA (guanine(37)-N(1))-methyltransferase (470 aa).

Residues 304-305 (DL), 332-333 (DG), and Asn370 contribute to the S-adenosyl-L-methionine site.

Belongs to the class I-like SAM-binding methyltransferase superfamily. TRM5/TYW2 family. Monomer.

It is found in the mitochondrion matrix. The protein resides in the nucleus. It localises to the cytoplasm. The enzyme catalyses guanosine(37) in tRNA + S-adenosyl-L-methionine = N(1)-methylguanosine(37) in tRNA + S-adenosyl-L-homocysteine + H(+). Functionally, specifically methylates the N1 position of guanosine-37 in various cytoplasmic and mitochondrial tRNAs. Methylation is not dependent on the nature of the nucleoside 5' of the target nucleoside. This is the first step in the biosynthesis of wybutosine (yW), a modified base adjacent to the anticodon of tRNAs and required for accurate decoding. This is tRNA (guanine(37)-N(1))-methyltransferase from Theileria parva (East coast fever infection agent).